The sequence spans 488 residues: GTPase Der (488 aa).

EngA-type G domains follow at residues proline 3–methionine 166 and isoleucine 199–threonine 372. GTP contacts are provided by residues glycine 9 to serine 16, aspartate 56 to isoleucine 60, asparagine 118 to aspartate 121, glycine 205 to serine 212, aspartate 252 to valine 256, and asparagine 317 to aspartate 320. One can recognise a KH-like domain in the interval arginine 373–aspartate 457. The disordered stretch occupies residues phenylalanine 460–lysine 488. Over residues arginine 473 to lysine 488 the composition is skewed to basic residues.

This sequence belongs to the TRAFAC class TrmE-Era-EngA-EngB-Septin-like GTPase superfamily. EngA (Der) GTPase family. As to quaternary structure, associates with the 50S ribosomal subunit.

In terms of biological role, GTPase that plays an essential role in the late steps of ribosome biogenesis. The sequence is that of GTPase Der from Shewanella baltica (strain OS223).